A 344-amino-acid chain; its full sequence is C-C chemokine receptor-like 2 (344 aa).

Topologically, residues 1-43 are extracellular; that stretch reads MANYTLAPEDEYDVLIEGELESDEAEQCDKYDAQALSAQLVPS. Asn3 carries N-linked (GlcNAc...) asparagine glycosylation. The chain crosses the membrane as a helical span at residues 44-64; that stretch reads LCSAVFVIGVLDNLLVVLILV. The Cytoplasmic segment spans residues 65–74; sequence KYKGLKRVEN. Residues 75–95 form a helical membrane-spanning segment; it reads IYLLNLAVSNLCFLLTLPFWA. Residues 96–104 lie on the Extracellular side of the membrane; the sequence is HAGGDPMCK. A disulfide bridge links Cys103 with Cys181. A helical transmembrane segment spans residues 105 to 125; the sequence is ILIGLYFVGLYSETFFNCLLT. The Cytoplasmic portion of the chain corresponds to 126-144; the sequence is VQRYLVFLHKGNFFSARRR. Residues 145–165 form a helical membrane-spanning segment; it reads VPCGIITSVLAWVTAILATLP. Residues 166–198 lie on the Extracellular side of the membrane; it reads EFVVYKPQMEDQKYKCAFSRTPFLPADETFWKH. A helical membrane pass occupies residues 199–219; the sequence is FLTLKMNISVLVLPLFIFTFL. The Cytoplasmic segment spans residues 220–238; it reads YVQMRKTLRFREQRYSLFK. The helical transmembrane segment at 239–259 threads the bilayer; sequence LVFAIMVVFLLMWAPYNIAFF. Residues 260–286 lie on the Extracellular side of the membrane; sequence LSTFKEHFSLSDCKSSYNLDKSVHITK. The helical transmembrane segment at 287–307 threads the bilayer; it reads LIATTHCCINPLLYAFLDGTF. The Cytoplasmic segment spans residues 308–344; it reads SKYLCRCFHLRSNTPLQPRGQSAQGTSREEPDHSTEV. Polar residues predominate over residues 324 to 333; that stretch reads QPRGQSAQGT. Residues 324–344 are disordered; the sequence is QPRGQSAQGTSREEPDHSTEV. The segment covering 334–344 has biased composition (basic and acidic residues); sequence SREEPDHSTEV.

It belongs to the G-protein coupled receptor 1 family. Expressed abundantly in immunal tissues such as spleen, fetal liver, lymph node and bone marrow. Strong expression also in lung and heart. Expressed in almost all hematopoietic cells including monocytes, macrophages, PMNs, T-cells (both CD4+ and CD8+), monocyte-derived iDCs, NK cells, and CD34+ progenitor cells. B-cells expressed isoform 1 but not isoform 2. Up-regulated on synovial neutrophils of rheumatoid arthritis patients.

Its subcellular location is the cell membrane. Receptor for CCL19 and chemerin/RARRES2. Does not appear to be a signaling receptor, but may have a role in modulating chemokine-triggered immune responses by capturing and internalizing CCL19 or by presenting RARRES2 ligand to CMKLR1, a functional signaling receptors. Plays a critical role for the development of Th2 responses. The chain is C-C chemokine receptor-like 2 (CCRL2) from Homo sapiens (Human).